Consider the following 598-residue polypeptide: Probable polysaccharide biosynthesis protein EpsC (598 aa).

The next 4 helical transmembrane spans lie at 1–21 (MIIALDTYLVLNSVIAGYQFL), 31–51 (GALLLTAVSLLLSYHVCAFLF), 63–83 (LGELIVLLKGITLSAAVTGVI), and 87–107 (VYHTMFFRLLTACWVLQLLSI).

The protein belongs to the polysaccharide synthase family.

The protein localises to the cell membrane. In terms of biological role, involved in biofilm formation. The sequence is that of Probable polysaccharide biosynthesis protein EpsC (epsC) from Bacillus subtilis (strain 168).